We begin with the raw amino-acid sequence, 217 residues long: Peptide methionine sulfoxide reductase MsrA (217 aa).

C56 is a catalytic residue.

It belongs to the MsrA Met sulfoxide reductase family.

It carries out the reaction L-methionyl-[protein] + [thioredoxin]-disulfide + H2O = L-methionyl-(S)-S-oxide-[protein] + [thioredoxin]-dithiol. The catalysed reaction is [thioredoxin]-disulfide + L-methionine + H2O = L-methionine (S)-S-oxide + [thioredoxin]-dithiol. Has an important function as a repair enzyme for proteins that have been inactivated by oxidation. Catalyzes the reversible oxidation-reduction of methionine sulfoxide in proteins to methionine. In Corynebacterium glutamicum (strain ATCC 13032 / DSM 20300 / JCM 1318 / BCRC 11384 / CCUG 27702 / LMG 3730 / NBRC 12168 / NCIMB 10025 / NRRL B-2784 / 534), this protein is Peptide methionine sulfoxide reductase MsrA.